The sequence spans 109 residues: Iron-sulfur cluster assembly protein CyaY (109 aa).

It belongs to the frataxin family.

Involved in iron-sulfur (Fe-S) cluster assembly. May act as a regulator of Fe-S biogenesis. The sequence is that of Iron-sulfur cluster assembly protein CyaY from Bordetella pertussis (strain Tohama I / ATCC BAA-589 / NCTC 13251).